We begin with the raw amino-acid sequence, 467 residues long: Ribulose bisphosphate carboxylase large chain (467 aa).

An N6,N6,N6-trimethyllysine modification is found at K5. Positions 114 and 164 each coordinate substrate. K166 serves as the catalytic Proton acceptor. K168 provides a ligand contact to substrate. Mg(2+) is bound by residues K192, D194, and E195. K192 is subject to N6-carboxylysine. Catalysis depends on H285, which acts as the Proton acceptor. Positions 286, 318, and 370 each coordinate substrate.

Belongs to the RuBisCO large chain family. Type I subfamily. Heterohexadecamer of 8 large chains and 8 small chains; disulfide-linked. The disulfide link is formed within the large subunit homodimers. The cofactor is Mg(2+). The disulfide bond which can form in the large chain dimeric partners within the hexadecamer appears to be associated with oxidative stress and protein turnover.

The protein localises to the plastid. Its subcellular location is the chloroplast. The enzyme catalyses 2 (2R)-3-phosphoglycerate + 2 H(+) = D-ribulose 1,5-bisphosphate + CO2 + H2O. It catalyses the reaction D-ribulose 1,5-bisphosphate + O2 = 2-phosphoglycolate + (2R)-3-phosphoglycerate + 2 H(+). Its function is as follows. RuBisCO catalyzes two reactions: the carboxylation of D-ribulose 1,5-bisphosphate, the primary event in carbon dioxide fixation, as well as the oxidative fragmentation of the pentose substrate in the photorespiration process. Both reactions occur simultaneously and in competition at the same active site. This is Ribulose bisphosphate carboxylase large chain from Jasminum simplicifolium subsp. suavissimum (Native jasmine).